We begin with the raw amino-acid sequence, 310 residues long: p-hydroxybenzoic acid efflux pump subunit AaeA (310 aa).

A helical transmembrane segment spans residues 12–32; that stretch reads VITLLLVIIAIVLIFRIWVFY.

Belongs to the membrane fusion protein (MFP) (TC 8.A.1) family.

It localises to the cell inner membrane. Its function is as follows. Forms an efflux pump with AaeB. This is p-hydroxybenzoic acid efflux pump subunit AaeA from Erwinia tasmaniensis (strain DSM 17950 / CFBP 7177 / CIP 109463 / NCPPB 4357 / Et1/99).